Reading from the N-terminus, the 304-residue chain is Serine/threonine-protein phosphatase PP1 isozyme 3 (304 aa).

Residues D61, H63, D89, and N121 each coordinate Mn(2+). The active-site Proton donor is the H122. H170 and H245 together coordinate Mn(2+).

The protein belongs to the PPP phosphatase family. PP-1 subfamily. Mn(2+) serves as cofactor.

The catalysed reaction is O-phospho-L-seryl-[protein] + H2O = L-seryl-[protein] + phosphate. It carries out the reaction O-phospho-L-threonyl-[protein] + H2O = L-threonyl-[protein] + phosphate. This is Serine/threonine-protein phosphatase PP1 isozyme 3 (NPP3) from Nicotiana tabacum (Common tobacco).